Reading from the N-terminus, the 470-residue chain is Chromosomal replication initiator protein DnaA (470 aa).

Positions 1–68 are domain I, interacts with DnaA modulators; the sequence is MENFWSLCLG…SALAEEVLST (68 aa). A domain II region spans residues 68–133; sequence TPVQIELALY…KKPKTLTETS (66 aa). Residues 134–350 form a domain III, AAA+ region region; the sequence is GLNPAFRFDN…GALNRIIAMA (217 aa). Residues Gly-178, Gly-180, Lys-181, and Thr-182 each contribute to the ATP site. The interval 351–470 is domain IV, binds dsDNA; sequence NFTGHAIDVS…IAVLIQVIRD (120 aa).

This sequence belongs to the DnaA family. As to quaternary structure, oligomerizes as a right-handed, spiral filament on DNA at oriC.

Its subcellular location is the cytoplasm. Functionally, plays an essential role in the initiation and regulation of chromosomal replication. ATP-DnaA binds to the origin of replication (oriC) to initiate formation of the DNA replication initiation complex once per cell cycle. Binds the DnaA box (a 9 base pair repeat at the origin) and separates the double-stranded (ds)DNA. Forms a right-handed helical filament on oriC DNA; dsDNA binds to the exterior of the filament while single-stranded (ss)DNA is stabiized in the filament's interior. The ATP-DnaA-oriC complex binds and stabilizes one strand of the AT-rich DNA unwinding element (DUE), permitting loading of DNA polymerase. After initiation quickly degrades to an ADP-DnaA complex that is not apt for DNA replication. Binds acidic phospholipids. The protein is Chromosomal replication initiator protein DnaA of Methylobacillus flagellatus (strain ATCC 51484 / DSM 6875 / VKM B-1610 / KT).